The following is a 141-amino-acid chain: Hemoglobin subunit alpha (141 aa).

The region spanning 1–141 (VLSANDKANV…VSTVLTSKYR (141 aa)) is the Globin domain. The residue at position 3 (Ser-3) is a Phosphoserine. Lys-7 and Lys-11 each carry N6-succinyllysine. N6-acetyllysine; alternate is present on Lys-16. At Lys-16 the chain carries N6-succinyllysine; alternate. Tyr-24 carries the phosphotyrosine modification. Position 35 is a phosphoserine (Ser-35). N6-succinyllysine is present on Lys-40. Ser-49 bears the Phosphoserine mark. His-58 serves as a coordination point for O2. His-87 serves as a coordination point for heme b. Ser-102 bears the Phosphoserine mark. Position 108 is a phosphothreonine (Thr-108). 2 positions are modified to phosphoserine: Ser-124 and Ser-131. Phosphothreonine occurs at positions 134 and 137. Ser-138 carries the post-translational modification Phosphoserine.

Belongs to the globin family. As to quaternary structure, heterotetramer of two alpha chains and two beta chains. Red blood cells.

Its function is as follows. Involved in oxygen transport from the lung to the various peripheral tissues. Functionally, hemopressin acts as an antagonist peptide of the cannabinoid receptor CNR1. Hemopressin-binding efficiently blocks cannabinoid receptor CNR1 and subsequent signaling. The chain is Hemoglobin subunit alpha (HBA) from Suncus murinus (Asian house shrew).